A 306-amino-acid polypeptide reads, in one-letter code: Glutaminase (306 aa).

Positions 61, 111, 157, 164, 188, 240, and 258 each coordinate substrate.

This sequence belongs to the glutaminase family. In terms of assembly, homotetramer.

It carries out the reaction L-glutamine + H2O = L-glutamate + NH4(+). The sequence is that of Glutaminase from Psychrobacter cryohalolentis (strain ATCC BAA-1226 / DSM 17306 / VKM B-2378 / K5).